The chain runs to 165 residues: 2-C-methyl-D-erythritol 2,4-cyclodiphosphate synthase (165 aa).

A divalent metal cation is bound by residues D9 and H11. 4-CDP-2-C-methyl-D-erythritol 2-phosphate-binding positions include 9-11 (DVH) and 35-36 (HS). Residue H43 coordinates a divalent metal cation. 4-CDP-2-C-methyl-D-erythritol 2-phosphate is bound by residues 57 to 59 (DIG), 101 to 107 (AQAPKML), 133 to 136 (TTTE), F140, and R143.

This sequence belongs to the IspF family. As to quaternary structure, homotrimer. It depends on a divalent metal cation as a cofactor.

It carries out the reaction 4-CDP-2-C-methyl-D-erythritol 2-phosphate = 2-C-methyl-D-erythritol 2,4-cyclic diphosphate + CMP. It participates in isoprenoid biosynthesis; isopentenyl diphosphate biosynthesis via DXP pathway; isopentenyl diphosphate from 1-deoxy-D-xylulose 5-phosphate: step 4/6. Its function is as follows. Involved in the biosynthesis of isopentenyl diphosphate (IPP) and dimethylallyl diphosphate (DMAPP), two major building blocks of isoprenoid compounds. Catalyzes the conversion of 4-diphosphocytidyl-2-C-methyl-D-erythritol 2-phosphate (CDP-ME2P) to 2-C-methyl-D-erythritol 2,4-cyclodiphosphate (ME-CPP) with a corresponding release of cytidine 5-monophosphate (CMP). This chain is 2-C-methyl-D-erythritol 2,4-cyclodiphosphate synthase, found in Pseudoalteromonas translucida (strain TAC 125).